The sequence spans 457 residues: Multidrug resistance protein MdtK (457 aa).

12 helical membrane passes run 11–31 (LSALAVPVIIAQVSQTSMGVV), 53–73 (IWLPAILFGHGLLLALTPVVA), 93–113 (FLAAIISVLTMLVLYQGEYAI), 127–147 (AIGYLHALLWGVPGYLFYQVL), 159–179 (PGMMIGFIGLLINIPINYIFI), 190–210 (GVGCGVATASVYWIMMLLMML), 249–269 (LLFEVTLFAVVALLVLPLGVV), 276–296 (IALNFSSLMFVLPLSVGVATT), 313–333 (IAAHTGIMAGVALACCTAIFT), 357–377 (LMLLAAVYQISDAVQVIGTGV), 387–407 (IFYITFVAYWVLGLPSGYLLA), and 417–437 (GPAGFWCGFIIGLTAAAVMMV).

The protein belongs to the multi antimicrobial extrusion (MATE) (TC 2.A.66.1) family. MdtK subfamily.

The protein resides in the cell inner membrane. Functionally, multidrug efflux pump that functions probably as a Na(+)/drug antiporter. The polypeptide is Multidrug resistance protein MdtK (Pectobacterium atrosepticum (strain SCRI 1043 / ATCC BAA-672) (Erwinia carotovora subsp. atroseptica)).